Here is a 178-residue protein sequence, read N- to C-terminus: Ribulose bisphosphate carboxylase small subunit, chloroplastic 2 (178 aa).

The transit peptide at 1-54 directs the protein to the chloroplast; sequence MASISSTVATVSRAAPAQANMVAPFTGLKSNVAFPATKKANDFSTLPSNGGRVQ.

This sequence belongs to the RuBisCO small chain family. Heterohexadecamer of 8 large and 8 small subunits.

The protein localises to the plastid. It localises to the chloroplast. RuBisCO catalyzes two reactions: the carboxylation of D-ribulose 1,5-bisphosphate, the primary event in carbon dioxide fixation, as well as the oxidative fragmentation of the pentose substrate. Both reactions occur simultaneously and in competition at the same active site. Although the small subunit is not catalytic it is essential for maximal activity. This is Ribulose bisphosphate carboxylase small subunit, chloroplastic 2 from Flaveria pringlei.